Here is a 44-residue protein sequence, read N- to C-terminus: MRYVASYLLAALGGNSSPSAKDIKKILDSVGIEADDDRLNKVIS.

Residue methionine 1 is modified to N-acetylmethionine. 2 positions are modified to phosphoserine: serine 17 and serine 19. Position 21 is an N6-acetyllysine; alternate (lysine 21). Lysine 21 carries the N6-succinyllysine; alternate modification.

Belongs to the eukaryotic ribosomal protein P1/P2 family. Heterodimer with RPLP1 at the lateral ribosomal stalk of the large ribosomal subunit. In terms of processing, phosphorylated.

Its function is as follows. Plays an important role in the elongation step of protein synthesis. This Oryctolagus cuniculus (Rabbit) protein is Large ribosomal subunit protein P2 (RPLP2).